The following is a 231-amino-acid chain: PIAGSMVLAAILLKLGGYGIIRMMQILPMTKTDVFLPFIILALWGAILANLTCLQQTDLKSLIAYSSISHMGLVVAAIMIQTPWGLSGAMALMIAHGFTSSALFCLANTTYERTHTRILILTRGFHNILPMTSTWWLLANLMNMATPPTLNFTSELLIMSTLFNWCPTTIILLGLSMLITASYSLHMFLSTQMGPTLLNNQTEPTHSREHLLMALHLVPLMMISMKPELII.

6 helical membrane-spanning segments follow: residues 1–21, 34–54, 61–80, 84–106, 118–138, and 169–189; these read PIAG…YGII, VFLP…LTCL, SLIA…AIMI, WGLS…LFCL, ILIL…WWLL, and TIIL…HMFL.

The protein belongs to the complex I subunit 4 family.

The protein resides in the mitochondrion membrane. It catalyses the reaction a ubiquinone + NADH + 5 H(+)(in) = a ubiquinol + NAD(+) + 4 H(+)(out). Its function is as follows. Core subunit of the mitochondrial membrane respiratory chain NADH dehydrogenase (Complex I) that is believed to belong to the minimal assembly required for catalysis. Complex I functions in the transfer of electrons from NADH to the respiratory chain. The immediate electron acceptor for the enzyme is believed to be ubiquinone. This chain is NADH-ubiquinone oxidoreductase chain 4 (MT-ND4), found in Porthidium nasutum (Hognosed pitviper).